We begin with the raw amino-acid sequence, 382 residues long: Cytochrome b (382 aa).

4 consecutive transmembrane segments (helical) span residues 36–56 (FGSL…FLTM), 80–101 (WLIR…YLHI), 116–136 (WFIG…GYVL), and 181–201 (FYTF…IHLL). Heme b contacts are provided by His-86 and His-100. The heme b site is built by His-185 and His-199. A ubiquinone is bound at residue His-204. A run of 4 helical transmembrane segments spans residues 229 to 249 (YKDL…TLSN), 291 to 311 (LGGV…PLTF), 323 to 343 (INQF…WIGA), and 350 to 370 (YIIT…LNPL).

This sequence belongs to the cytochrome b family. The main subunits of complex b-c1 are: cytochrome b, cytochrome c1 and the Rieske protein. Requires heme b as cofactor.

It localises to the mitochondrion inner membrane. Functionally, component of the ubiquinol-cytochrome c reductase complex (complex III or cytochrome b-c1 complex) that is part of the mitochondrial respiratory chain. The b-c1 complex mediates electron transfer from ubiquinol to cytochrome c. Contributes to the generation of a proton gradient across the mitochondrial membrane that is then used for ATP synthesis. The chain is Cytochrome b (MT-CYB) from Samia ricini (Indian eri silkmoth).